The primary structure comprises 336 residues: Retinol dehydrogenase 10-B (336 aa).

Residues 7 to 27 (LFVVTFKIIWSFVLAGAKWFI) form a helical; Signal-anchor membrane-spanning segment. 40–64 (VITGAGSGLGRLFALEFARRRATLV) contributes to the NADP(+) binding site. Ser-192 is a binding site for substrate. The Proton acceptor role is filled by Tyr-205.

The protein belongs to the short-chain dehydrogenases/reductases (SDR) family.

Its subcellular location is the microsome membrane. It localises to the endoplasmic reticulum membrane. The catalysed reaction is all-trans-retinol + NADP(+) = all-trans-retinal + NADPH + H(+). It participates in cofactor metabolism; retinol metabolism. Its function is as follows. Retinol dehydrogenase with a clear preference for NADP. Converts all-trans-retinol to all-trans-retinal. Has no detectable activity towards 11-cis-retinol, 9-cis-retinol and 13-cis-retinol. This is Retinol dehydrogenase 10-B (rdh10b) from Danio rerio (Zebrafish).